The sequence spans 325 residues: GMP reductase (325 aa).

Catalysis depends on Cys-173, which acts as the Thioimidate intermediate. 202–225 (IIADGGIRSHGDIAKSIRFGATMV) provides a ligand contact to NADP(+).

Belongs to the IMPDH/GMPR family. GuaC type 2 subfamily.

The enzyme catalyses IMP + NH4(+) + NADP(+) = GMP + NADPH + 2 H(+). Its function is as follows. Catalyzes the irreversible NADPH-dependent deamination of GMP to IMP. It functions in the conversion of nucleobase, nucleoside and nucleotide derivatives of G to A nucleotides, and in maintaining the intracellular balance of A and G nucleotides. The polypeptide is GMP reductase (Paracidovorax citrulli (strain AAC00-1) (Acidovorax citrulli)).